A 138-amino-acid chain; its full sequence is Actophorin (138 aa).

The region spanning 3–134 (GIQLADEVTS…NLDEVIAKVK (132 aa)) is the ADF-H domain.

The protein belongs to the actin-binding proteins ADF family. In terms of assembly, interacts with F-actin. Does not interact with G-actin. Interacts with 14-3-3 protein 3.

The protein localises to the cytoplasm. It is found in the cytoskeleton. It localises to the cell membrane. Its subcellular location is the cell projection. The protein resides in the phagocytic cup. The protein localises to the pseudopodium. Actin-binding protein that severs actin filaments. The chain is Actophorin from Entamoeba histolytica (strain ATCC 30459 / HM-1:IMSS / ABRM).